The sequence spans 457 residues: UDP-N-acetylmuramate--L-alanine ligase (457 aa).

112 to 118 (GAHGKTS) is a binding site for ATP.

It belongs to the MurCDEF family.

The protein localises to the cytoplasm. It catalyses the reaction UDP-N-acetyl-alpha-D-muramate + L-alanine + ATP = UDP-N-acetyl-alpha-D-muramoyl-L-alanine + ADP + phosphate + H(+). It functions in the pathway cell wall biogenesis; peptidoglycan biosynthesis. Functionally, cell wall formation. This chain is UDP-N-acetylmuramate--L-alanine ligase, found in Desulfosudis oleivorans (strain DSM 6200 / JCM 39069 / Hxd3) (Desulfococcus oleovorans).